A 142-amino-acid chain; its full sequence is Transcriptional regulator MraZ (142 aa).

SpoVT-AbrB domains follow at residues 5–51 (ASAL…PRPE) and 77–120 (AADV…DAAT).

This sequence belongs to the MraZ family. As to quaternary structure, forms oligomers.

Its subcellular location is the cytoplasm. It localises to the nucleoid. In Ralstonia pickettii (strain 12J), this protein is Transcriptional regulator MraZ.